The chain runs to 475 residues: MPQTTPYSSKFNPSAYSSSHSHRQPVEENYGGLHYRDNKLVSGSLEALIQLLVPTVDYYPDRSYIFTFLLSSRLFLNPFELMSRVCYLGVDHHRVGDPQMDKKRIRDIAPKIVQLLTEWTETFPYDFRDERMMRSLKEMTHRLAFGDELSRRAMQRLIQRLLRKLTTLGQYEESLATTSAAAAIDRPVALKSKQQLVRRDDCVLNLCDDPFIFAQQLTHIEMERLSYIGPEEFVRAFAQKRPSDNHKSFFSKRKASNLEAYVEWFNRLSYLTATEICMPVKKKHRARVLEFFIDVAQECFNIGNFNSLMAIITGMNMNPVSRLKKTWGKVNTDKFDILVHQMDPSSNFYSYRTALRGATQRSSTAHTSQEMIVIPFFSLFIKDIYFLNEGCANRLSNGHINFEKFWELAKQVSEFLSWRQVICPFERDRKTLQYLISAPVFSEDELQLASYESEGPENNLERDTRRSLRSSLSRM.

Over residues 1–19 the composition is skewed to polar residues; the sequence is MPQTTPYSSKFNPSAYSSS. A disordered region spans residues 1–25; that stretch reads MPQTTPYSSKFNPSAYSSSHSHRQP. The N-terminal Ras-GEF domain occupies 36-166; it reads RDNKLVSGSL…LIQRLLRKLT (131 aa). Residues 209 to 456 enclose the Ras-GEF domain; sequence DPFIFAQQLT…QLASYESEGP (248 aa). The tract at residues 452-475 is disordered; sequence ESEGPENNLERDTRRSLRSSLSRM.

Its function is as follows. Guanine nucleotide exchange factor (GEF) for Ras family proteins. This Danio rerio (Zebrafish) protein is Ras-GEF domain-containing family member 1B-B.